The following is a 587-amino-acid chain: MEGESVKPSPQPTAQAEDEEKNRRTVTVNAAHMGKAFKVMNELRSKRLLCDVMIVAEDVEVEAHRVVLAACSPYFCAMFTGDMSESKAKKIEIKDVDGQTLSKLIDYIYTAEIEVTEENVQVLLPAASLLQLMDVRQNCCDFLQSQLHPTNCLGIRAFADVHTCTDLLQQANAYAEQHFPEVMLGEEFLSLSLDQVCSLISSDKLTVSSEEKVFEAVISWINYEKETRLDHMAKLMEHVRLPLLPRDYLVQTVEEEALIKNNNTCKDFLIEAMKYHLLPLDQRLLIKNPRTKPRTPVSLPKVMIVVGGQAPKAIRSVECYDFEEGRWDQIAELPSRRCRAGVVFMAGHVYAVGGFNGSLRVRTVDVYDGVKDQWTSIASMQERRSTLGAAVLNDLLYAVGGFDGSTGLASVEAYSYKTNEWFFVAPMNTRRSSVGVGVVEGKLYAVGGYDGASRQCLSTVEQYNPATNEWIYVADMSTRRSGAGVGVLSGQLYATGGHDGPLVRKSVEVYDPGTNTWKQVADMNMCRRNAGVCAVNGLLYVVGGDDGSCNLASVEYYNPVTDKWTLLPTNMSTGRSYAGVAVIHKSL.

Residues 1 to 24 form a disordered region; it reads MEGESVKPSPQPTAQAEDEEKNRR. Residues 50-117 form the BTB domain; sequence CDVMIVAEDV…IYTAEIEVTE (68 aa). The region spanning 152–254 is the BACK domain; that stretch reads CLGIRAFADV…PRDYLVQTVE (103 aa). Residue T295 is modified to Phosphothreonine. Kelch repeat units follow at residues 302-347, 348-394, 396-441, 442-490, 491-537, and 539-585; these read VMIV…FMAG, HVYA…VLND, LYAV…VVEG, KLYA…VLSG, QLYA…AVNG, and LYVV…VIHK. T375 is subject to Phosphothreonine. Phosphoserine occurs at positions 376 and 433.

It belongs to the KLHL3 family. Homodimer. Component of the BCR(KLHL3) E3 ubiquitin ligase complex, at least composed of CUL3 and KLHL3 and RBX1. Interacts with CLDN8. In terms of processing, phosphorylation at Ser-433 by PKA or PKC decreases the interaction with WNK1 and WNK4, leading to inhibit their degradation by the BCR(KLHL3) complex. Phosphorylated at Ser-433 by PKC in response to angiotensin II signaling, decreasing ability to promote degradation of WNK1 and WNK4, leading to activation of Na-Cl cotransporter SLC12A3/NCC. Phosphorylation at Ser-433 is increased by insulin. Dephosphorylated at Ser-433 by calcineurin PPP3CA, promoting degradation of WNK1 and WNK4. Present at high level in brain and kidney (at protein level). Weakly expressed in other tissues. In kidney, predominantly localizes to the distal convoluted tubule (DCT) and collecting duct, with apical localization in the DCT (at protein level).

The protein localises to the cytoplasm. Its subcellular location is the cytosol. It is found in the cytoskeleton. It participates in protein modification; protein ubiquitination. Substrate-specific adapter of a BCR (BTB-CUL3-RBX1) E3 ubiquitin ligase complex that acts as a regulator of ion transport in the distal nephron. The BCR(KLHL3) complex acts by mediating ubiquitination and degradation of WNK1 and WNK4, two activators of Na-Cl cotransporter SLC12A3/NCC in distal convoluted tubule cells of kidney, thereby regulating NaCl reabsorption. The BCR(KLHL3) complex also mediates ubiquitination of CLDN8, a tight-junction protein required for paracellular chloride transport in the kidney, leading to its degradation. The protein is Kelch-like protein 3 of Mus musculus (Mouse).